A 159-amino-acid polypeptide reads, in one-letter code: Phosphopantetheine adenylyltransferase (159 aa).

Histidine 16 is an ATP binding site. Substrate is bound by residues lysine 40, methionine 72, and arginine 86. ATP contacts are provided by residues glycine 87 to arginine 89, glutamate 97, and tyrosine 122 to serine 128.

This sequence belongs to the bacterial CoaD family. In terms of assembly, homohexamer. Requires Mg(2+) as cofactor.

It is found in the cytoplasm. It catalyses the reaction (R)-4'-phosphopantetheine + ATP + H(+) = 3'-dephospho-CoA + diphosphate. Its pathway is cofactor biosynthesis; coenzyme A biosynthesis; CoA from (R)-pantothenate: step 4/5. Functionally, reversibly transfers an adenylyl group from ATP to 4'-phosphopantetheine, yielding dephospho-CoA (dPCoA) and pyrophosphate. This Dehalococcoides mccartyi (strain ATCC BAA-2266 / KCTC 15142 / 195) (Dehalococcoides ethenogenes (strain 195)) protein is Phosphopantetheine adenylyltransferase.